The following is a 361-amino-acid chain: MTVTALGLPTVARSTGDGSAGASPAPADGPLVDTYGRAATDLRVSLTDRCNLRCTYCMPAEGLNWLPGDALLSPTELARLLRIAVARLGITSVRFTGGEPLVVRHLEEVVAAAAALEPRPEITLTTNGLGLARRAEGLKKAGLNRINVSLDSVDAAHFARITRRDRLPDVLAGLAAAKAAGLEPVKVNAVLDPVSGLDDAVELLRYCLQHGYQLRIIEQMPLDASHSWQRDNVIDADRILQTLQQHFELTPDSRPRGSAPAELWQVAEGPTHAAGTVGVIASVSHAFCSACDRTRLTADGQIRSCLFSREETDLRHLLRGGADDAEIEAAWRAAMWSKPAGHGINDPDFVQPVRPMSAIGG.

A disordered region spans residues 1–30 (MTVTALGLPTVARSTGDGSAGASPAPADGP). Low complexity predominate over residues 16-30 (GDGSAGASPAPADGP). The region spanning 34–252 (TYGRAATDLR…LQQHFELTPD (219 aa)) is the Radical SAM core domain. GTP is bound at residue Arg43. 2 residues coordinate [4Fe-4S] cluster: Cys50 and Cys54. Tyr56 contacts S-adenosyl-L-methionine. Cys57 contributes to the [4Fe-4S] cluster binding site. Arg94 contributes to the GTP binding site. Position 98 (Gly98) interacts with S-adenosyl-L-methionine. Thr125 is a binding site for GTP. Residue Ser149 participates in S-adenosyl-L-methionine binding. Residue Lys186 participates in GTP binding. Position 220 (Met220) interacts with S-adenosyl-L-methionine. 2 residues coordinate [4Fe-4S] cluster: Cys288 and Cys291. 293–295 (RTR) contributes to the GTP binding site. Position 305 (Cys305) interacts with [4Fe-4S] cluster.

The protein belongs to the radical SAM superfamily. MoaA family. As to quaternary structure, monomer and homodimer. [4Fe-4S] cluster serves as cofactor.

The enzyme catalyses GTP + AH2 + S-adenosyl-L-methionine = (8S)-3',8-cyclo-7,8-dihydroguanosine 5'-triphosphate + 5'-deoxyadenosine + L-methionine + A + H(+). The protein operates within cofactor biosynthesis; molybdopterin biosynthesis. Its function is as follows. Catalyzes the cyclization of GTP to (8S)-3',8-cyclo-7,8-dihydroguanosine 5'-triphosphate. The sequence is that of GTP 3',8-cyclase from Mycolicibacterium smegmatis (strain ATCC 700084 / mc(2)155) (Mycobacterium smegmatis).